The following is a 479-amino-acid chain: tRNA-2-methylthio-N(6)-dimethylallyladenosine synthase (479 aa).

Residues 3–120 (KKLYIKTWGC…LPEMVNQVSE (118 aa)) form the MTTase N-terminal domain. [4Fe-4S] cluster is bound by residues Cys12, Cys49, Cys83, Cys157, Cys161, and Cys164. A Radical SAM core domain is found at 143 to 375 (KADGASAFVS…QQRLNQQSMA (233 aa)). One can recognise a TRAM domain in the interval 378–441 (RRMLETEQRI…PNSLRGELIR (64 aa)).

This sequence belongs to the methylthiotransferase family. MiaB subfamily. As to quaternary structure, monomer. [4Fe-4S] cluster is required as a cofactor.

It localises to the cytoplasm. It carries out the reaction N(6)-dimethylallyladenosine(37) in tRNA + (sulfur carrier)-SH + AH2 + 2 S-adenosyl-L-methionine = 2-methylsulfanyl-N(6)-dimethylallyladenosine(37) in tRNA + (sulfur carrier)-H + 5'-deoxyadenosine + L-methionine + A + S-adenosyl-L-homocysteine + 2 H(+). Functionally, catalyzes the methylthiolation of N6-(dimethylallyl)adenosine (i(6)A), leading to the formation of 2-methylthio-N6-(dimethylallyl)adenosine (ms(2)i(6)A) at position 37 in tRNAs that read codons beginning with uridine. In Idiomarina loihiensis (strain ATCC BAA-735 / DSM 15497 / L2-TR), this protein is tRNA-2-methylthio-N(6)-dimethylallyladenosine synthase.